Consider the following 1582-residue polypeptide: Dynein axonemal assembly factor 1 homolog (1582 aa).

LRR repeat units lie at residues 38–60, 61–82, 83–104, 105–126, 129–150, and 154–175; these read RLND…DEYT, ELKS…TKLT, KLKC…EFNR, ELDT…GTDI, VLNT…AALV, and TLSV…KIFE. The 39-residue stretch at 189–227 folds into the LRRCT domain; that stretch reads PVVSRLPQYRKTLILACKELTYLDSRPVFPRDRACAEAW. Disordered stretches follow at residues 245–420, 560–587, 859–878, 913–942, 1073–1092, 1101–1137, 1150–1218, 1305–1345, 1358–1438, 1484–1517, and 1529–1548; these read AERR…SEMD, SSDV…VKSQ, FSKD…EDRR, DTGE…DDDA, SSNE…LVER, MQRM…MGEG, TEII…QAEG, KDNE…TAKD, LDPE…PYQT, EDSK…NPKN, and PSES…STEQ. A compositionally biased stretch (low complexity) spans 313–327; it reads ESQASEHSTTSSTSA. Residues 339 to 392 show a composition bias toward basic and acidic residues; the sequence is HIAERISNRRVKPLEGRPKVLYDEAASGDEKAVTTTDSKKDSNAEDLPELKDIT. Over residues 409 to 420 the composition is skewed to polar residues; sequence TLLQSDSGSEMD. The segment covering 572–582 has biased composition (acidic residues); it reads ESDEEPTEEEM. Positions 928 to 942 are enriched in acidic residues; sequence SDSESEKEVEEDDDA. 2 stretches are compositionally biased toward basic and acidic residues: residues 1078 to 1092 and 1103 to 1125; these read LEAK…LVER and RMKE…KEEE. Residues 1166–1178 show a composition bias toward low complexity; it reads EGGAQQEEGGAQS. Basic and acidic residues-rich tracts occupy residues 1321–1335, 1398–1427, and 1484–1514; these read PKEE…ETET, SALK…KDTE, and EDSK…RPEN. Over residues 1529–1540 the composition is skewed to acidic residues; the sequence is PSESLEDTEATE.

Belongs to the DNAAF1 family.

The protein resides in the cell projection. Its subcellular location is the cilium. Cilium-specific protein required for cilia structures. The chain is Dynein axonemal assembly factor 1 homolog (dtr) from Drosophila pseudoobscura pseudoobscura (Fruit fly).